The primary structure comprises 290 residues: Cbb3-type cytochrome c oxidase subunit FixP (290 aa).

The helical transmembrane segment at 33-53 (WWVITFYITIVWAIGYWIVYP) threads the bilayer. Cytochrome c domains follow at residues 109 to 198 (LARA…RSLS) and 206 to 287 (YDAA…HSLG). The heme c site is built by Cys122, Cys125, His126, Met173, Cys219, Cys222, His223, and Met264.

This sequence belongs to the CcoP / FixP family. As to quaternary structure, component of the cbb3-type cytochrome c oxidase at least composed of FixN, FixO, FixQ and FixP. Heme c is required as a cofactor.

Its subcellular location is the cell inner membrane. It participates in energy metabolism; oxidative phosphorylation. Its function is as follows. C-type cytochrome. Part of the cbb3-type cytochrome c oxidase complex. FixP subunit is required for transferring electrons from donor cytochrome c via its heme groups to FixO subunit. From there, electrons are shuttled to the catalytic binuclear center of FixN subunit where oxygen reduction takes place. The complex also functions as a proton pump. This Bradyrhizobium sp. (strain ORS 278) protein is Cbb3-type cytochrome c oxidase subunit FixP.